The following is a 273-amino-acid chain: Type II iodothyronine deiodinase (273 aa).

Residues 1–9 (MGILSVDLL) lie on the Lumenal side of the membrane. Residues 10 to 34 (ITLQILPVFFSNCLFLALYDSVILL) form a helical; Signal-anchor for type III membrane protein membrane-spanning segment. The Cytoplasmic portion of the chain corresponds to 35–273 (KHVVLLLSRS…KRUKKTRLAG (239 aa)). The active site involves selenocysteine 133. 2 non-standard amino acids (selenocysteine) are found at residues selenocysteine 133 and selenocysteine 266.

Belongs to the iodothyronine deiodinase family. As to quaternary structure, predominantly monomer. Can form homodimers but homodimerization is not essential for enzyme activity. Interacts with USP20 and USP33. Interacts with MARCHF6. Post-translationally, ubiquitinated by MARCHF6, leading to its degradation by the proteasome. Deubiquitinated by USP20 and USP33. In terms of tissue distribution, isoform 1 is expressed in the lung, trachea, kidney, heart, skeletal muscle, placenta, fetal brain and several regions of the adult brain. Isoform 2 is expressed in the brain, heart, kidney and trachea.

Its subcellular location is the endoplasmic reticulum membrane. The catalysed reaction is 3,3',5-triiodo-L-thyronine + iodide + A + H(+) = L-thyroxine + AH2. It carries out the reaction 3,3'-diiodo-L-thyronine + iodide + A + H(+) = 3,3',5'-triiodo-L-thyronine + AH2. It catalyses the reaction 3'-iodo-L-thyronine + iodide + A + H(+) = 3',5'-diiodo-L-thyronine + AH2. The enzyme catalyses 3,3'-diiodothyronamine + iodide + A + H(+) = 3,3',5'-triiodothyronamine + AH2. The catalysed reaction is 3'-iodothyronamine + iodide + A + H(+) = 3',5'-diiodothyronamine + AH2. Functionally, plays a crucial role in the metabolism of thyroid hormones (TH) and has specific roles in TH activation and inactivation by deiodination. Catalyzes the deiodination of L-thyroxine (T4) to 3,5,3'-triiodothyronine (T3), 3,3',5'-triiodothyronine (rT3) to 3,3'-diiodothyronine (3,3'-T2) and 3',5'-diiodothyronine (3',5'-T2) to 3'-monoiodothyronine (3'-T1) via outer-ring deiodination (ORD). Catalyzes the phenolic ring deiodinations of 3,3',5'-triiodothyronamine and 3',5'- diiodothyronamine. This chain is Type II iodothyronine deiodinase (DIO2), found in Homo sapiens (Human).